The primary structure comprises 301 residues: Acetylglutamate kinase (301 aa).

Residues 68 to 69, arginine 90, and asparagine 195 contribute to the substrate site; that span reads GG.

Belongs to the acetylglutamate kinase family. ArgB subfamily.

It is found in the cytoplasm. It carries out the reaction N-acetyl-L-glutamate + ATP = N-acetyl-L-glutamyl 5-phosphate + ADP. It functions in the pathway amino-acid biosynthesis; L-arginine biosynthesis; N(2)-acetyl-L-ornithine from L-glutamate: step 2/4. Catalyzes the ATP-dependent phosphorylation of N-acetyl-L-glutamate. The chain is Acetylglutamate kinase from Pseudomonas putida (strain ATCC 700007 / DSM 6899 / JCM 31910 / BCRC 17059 / LMG 24140 / F1).